The sequence spans 1152 residues: Calcium-activated potassium channel subunit alpha-1 (1152 aa).

The tract at residues 1–37 (MSSNIHANHLSLDASSSSSSSSSSSSSSSSSSSSVHE) is disordered. The Extracellular portion of the chain corresponds to 1–60 (MSSNIHANHLSLDASSSSSSSSSSSSSSSSSSSSVHEPKMDALIIPVTMEVPCDSRGQRM). Low complexity predominate over residues 15 to 34 (SSSSSSSSSSSSSSSSSSSS). The chain crosses the membrane as a helical span at residues 61-81 (WWAFLASSMVTFFGGLFIILL). Residues 82-152 (WRTLKYLWTV…MISAQTLTGR (71 aa)) are Cytoplasmic-facing. 3 S-palmitoyl cysteine lipidation sites follow: Cys-92, Cys-93, and Cys-95. A helical transmembrane segment spans residues 153-173 (VLVVLVFALSIGALVIYFIDS). Residues 174–188 (SNPIESCQNFYKDFT) are Extracellular-facing. A helical membrane pass occupies residues 189-209 (LQIDMAFNVFFLLYFGLRFIA). Residues 210 to 213 (ANDK) lie on the Cytoplasmic side of the membrane. Residues 214–234 (LWFWLEVNSVVDFFTVPPVFV) form a helical membrane-spanning segment. The Extracellular portion of the chain corresponds to 235 to 238 (SVYL). A helical; Voltage-sensor transmembrane segment spans residues 239-259 (NRSWLGLRFLRALRLIQFSEI). Residues 260–274 (LQFLNILKTSNSIKL) lie on the Cytoplasmic side of the membrane. A helical transmembrane segment spans residues 275-295 (VNLLSIFISTWLTAAGFIHLV). Residues 296-309 (ENSGDPWENFQNNQ) are Extracellular-facing. Positions 310-332 (ALTYWECVYLLMVTMSTVGYGDV) form an intramembrane region, pore-forming. A Selectivity for potassium motif is present at residues 326-329 (TVGY). Topologically, residues 333–341 (YAKTTLGRL) are extracellular. Residues 342-362 (FMVFFILGGLAMFASYVPEII) form a helical membrane-spanning segment. Over 363–1152 (ELIGNRKKYG…KQKYVQEERL (790 aa)) the chain is Cytoplasmic. The 143-residue stretch at 381–523 (RKHIVVCGHI…WNWKEGDDAI (143 aa)) folds into the RCK N-terminal 1 domain. The Mg(2+) site is built by Glu-413, Gln-436, and Glu-438. The segment at 530 to 550 (LGFIAQSCLAQGLSTMLANLF) is segment S7. The tract at residues 587 to 607 (LSFPTVCELCFVKLKLLMIAI) is segment S8. Positions 651 to 655 (CKACH) are heme-binding motif. The disordered stretch occupies residues 675-703 (EQPSTLSPKKKQRNGGMRNSPSSSPKLMR). At Thr-679 the chain carries Phosphothreonine. 3 positions are modified to phosphoserine: Ser-681, Ser-694, and Ser-698. A segment S9 region spans residues 753 to 773 (VLSGHVVVCIFGDVSSALIGL). The RCK N-terminal 2 domain maps to 755 to 899 (SGHVVVCIFG…MDRSSPDNSP (145 aa)). A Phosphothreonine modification is found at Thr-886. 2 positions are modified to phosphoserine: Ser-894 and Ser-898. The Calcium bowl motif lies at 919-941 (TELVNDTNVQFLDQDDDDDPDTE). Residues Gln-928, Asp-931, Asp-934, and Asp-936 each coordinate Ca(2+). Residues 948–968 (FACGTAFAVSVLDSLMSATYF) are segment S10. A compositionally biased stretch (low complexity) spans 1102 to 1127 (RASLSHSSHSSQSSSKKSSSVHSIPS). The interval 1102–1152 (RASLSHSSHSSQSSSKKSSSVHSIPSTANRQNRPKSRESRDKQKYVQEERL) is disordered. A compositionally biased stretch (basic and acidic residues) spans 1136-1152 (KSRESRDKQKYVQEERL). Residues Ser-1137 and Ser-1140 each carry the phosphoserine modification.

The protein belongs to the potassium channel family. Calcium-activated (TC 1.A.1.3) subfamily. KCa1.1/KCNMA1 sub-subfamily. In terms of assembly, homotetramer; which constitutes the calcium-activated potassium channel. Interacts with beta subunits KCNMB1, KCNMB2, KCNMB3 and KCNMB4. Interacts with gamma subunits LRRC26, LRRC38, LRRC52 and LRRC55. Beta and gamma subunits are accessory, and modulate its activity. Interacts with RAB11B. Phosphorylated. Phosphorylation by kinases such as PKA and/or PKG. In smooth muscles, phosphorylation affects its activity. Post-translationally, palmitoylation by ZDHHC22 and ZDHHC23 within the intracellular linker between the S0 and S1 transmembrane domains regulates localization to the plasma membrane. Depalmitoylated by LYPLA1 and LYPLAL1, leading to retard exit from the trans-Golgi network.

The protein localises to the cell membrane. It catalyses the reaction K(+)(in) = K(+)(out). Its activity is regulated as follows. Ethanol and carbon monoxide-bound heme increase channel activation. Heme inhibits channel activation. In terms of biological role, potassium channel activated by both membrane depolarization or increase in cytosolic Ca(2+) that mediates export of K(+). It is also activated by the concentration of cytosolic Mg(2+). Its activation dampens the excitatory events that elevate the cytosolic Ca(2+) concentration and/or depolarize the cell membrane. It therefore contributes to repolarization of the membrane potential. Plays a key role in controlling excitability in a number of systems, such as regulation of the contraction of smooth muscle, the tuning of hair cells in the cochlea, regulation of transmitter release, and innate immunity. In smooth muscles, its activation by high level of Ca(2+), caused by ryanodine receptors in the sarcoplasmic reticulum, regulates the membrane potential. In cochlea cells, its number and kinetic properties partly determine the characteristic frequency of each hair cell and thereby helps to establish a tonotopic map. Kinetics of KCNMA1 channels are determined by alternative splicing, phosphorylation status and its combination with modulating beta subunits. Highly sensitive to both iberiotoxin (IbTx) and charybdotoxin (CTX). This chain is Calcium-activated potassium channel subunit alpha-1 (KCNMA1), found in Sus scrofa (Pig).